Consider the following 76-residue polypeptide: Large ribosomal subunit protein bL31 (76 aa).

The Zn(2+) site is built by cysteine 16, cysteine 18, cysteine 38, and cysteine 41.

This sequence belongs to the bacterial ribosomal protein bL31 family. Type A subfamily. Part of the 50S ribosomal subunit. Zn(2+) serves as cofactor.

Functionally, binds the 23S rRNA. This Nocardia farcinica (strain IFM 10152) protein is Large ribosomal subunit protein bL31.